Reading from the N-terminus, the 170-residue chain is Small ribosomal subunit protein bS16 (170 aa).

The tract at residues 109–170 is disordered; that stretch reads ALAEAEGGPS…AAESEAPAAE (62 aa). The segment covering 131 to 150 has biased composition (basic and acidic residues); that stretch reads AKKDEQPTEKAAEPAAEKAA. Residues 151-170 are compositionally biased toward low complexity; it reads EPAAEAPAEAAAESEAPAAE.

Belongs to the bacterial ribosomal protein bS16 family.

This is Small ribosomal subunit protein bS16 from Mycolicibacterium gilvum (strain PYR-GCK) (Mycobacterium gilvum (strain PYR-GCK)).